A 290-amino-acid chain; its full sequence is Xylanase inhibitor protein 2 (290 aa).

Positions 1 to 27 (MGLVHALLPFAAAAALLLLAAPPPATA) are cleaved as a signal peptide. The region spanning 30-290 (PGLAVYWGRH…DKKANYTGEG (261 aa)) is the GH18 domain. Cysteines 49 and 89 form a disulfide. The N-linked (GlcNAc...) asparagine glycan is linked to N112. C187 and C216 are oxidised to a cystine. N285 carries an N-linked (GlcNAc...) asparagine glycan.

It belongs to the glycosyl hydrolase 18 family. Xylanase inhibitor subfamily. Binds to fungal GH10 xylanases.

The protein resides in the secreted. Functionally, fungal xylanase inhibitor. Possesses competitive inhibiting activity against several fungal endo-1,4-beta-D-xylanases belonging to glycoside hydrolase family 10 (GH10) and family 11 (GH11). May function in plant defense against secreted fungal pathogen xylanases. Is similar to class III chitinases, but does not exhibit chitinase activity. This chain is Xylanase inhibitor protein 2, found in Oryza sativa subsp. japonica (Rice).